We begin with the raw amino-acid sequence, 765 residues long: MYSSNSRRAASILACIVSLTQLGFAQSPFPDCENGPLSKNAVCDTTLDPVTRAQALLAAMTLEEKINNTQYNSPGVPRLGLPAYNWWSEALHGVAGSPGVHFADSGNFSYATSFPSPITLGAAFDDDLVKQIATVIGTEGRAFGNAGHAGLDYWTPNINPYRDPRWGRGQETPGEDPFHTSRYVYHLIDGLQDGIGPEKPKIVATCKHFAGYDIEDWEGNERYAFDAVISDQDMAEYYFPPFKTCTRDAKVDAVMCSYNSVNGIPTCADPWLLQTVLREHWEWEGVGHWVTSDCGAIDNIYKDHKYVADGAHAAAVAVNAGTDLDCGSVYPQFLGSAISQGLLGNRTLDRALTRLYSSLVKLGYFDPAADQPYRSIGWSDVATPDAEQLAHTAAVEGTVLLKNDGTLPLKKNGTVAIVGPYANATTQLQGNYEGTAKYIHTMLSAAAQQGYKVKYAPGTGINSNSTSGFEQALNAAKGSDLVIYFGGIDHEVEAEALDRTSIAWPGNQLDLIQQLSDLKKPLVVVQFGGGQVDDSSLLSNAGVNGLLWAGYPSQAGGAAVFDILTGKTAPAGRLPVTQYPEEYVDQVPMTDMNLRPGPSNPGRTYRWYDKAVIPFGYGMHYTTFDVSWKRKNYGPYNTAAVKAENAVLETFSLQVKNTGKVTSDYVALVFLTTTDAGPKPYPIKTLVGYQRVKAIRPGERKVVDIDVTVGSVARTAANGDLVLYPGSYKLQVDVEKDYPTAGFKIAGKEVVLDHFPQPPRNATKA.

Positions 1–25 (MYSSNSRRAASILACIVSLTQLGFA) are cleaved as a signal peptide. N-linked (GlcNAc...) asparagine glycosylation is found at Asn67 and Asn107. Residue Asp293 is part of the active site. Residues Asn345, Asn412, Asn423, Asn464, and Asn761 are each glycosylated (N-linked (GlcNAc...) asparagine).

The protein belongs to the glycosyl hydrolase 3 family.

The protein localises to the secreted. It carries out the reaction Hydrolysis of (1-&gt;4)-beta-D-xylans, to remove successive D-xylose residues from the non-reducing termini.. It participates in glycan degradation; xylan degradation. Functionally, xylan 1,4-beta-xylosidase involved in the hydrolysis of xylan, a major structural heterogeneous polysaccharide found in plant biomass representing the second most abundant polysaccharide in the biosphere, after cellulose. This is Probable exo-1,4-beta-xylosidase bxlB (bxlB) from Aspergillus terreus (strain NIH 2624 / FGSC A1156).